A 248-amino-acid chain; its full sequence is NADH dehydrogenase [ubiquinone] flavoprotein 2, mitochondrial (248 aa).

Residues 1-31 (MFSLALRARATGLAAQWGRHARNLHKTAVHN) constitute a mitochondrion transit peptide. Lysine 60 bears the N6-acetyllysine mark. Positions 134, 139, 175, and 179 each coordinate [2Fe-2S] cluster. Residue tyrosine 192 is modified to Phosphotyrosine; by SRC. The disordered stretch occupies residues 229–248 (GLTSLTEPPKGPGFGVQAGL).

The protein belongs to the complex I 24 kDa subunit family. As to quaternary structure, core subunit of respiratory chain NADH dehydrogenase (Complex I) which is composed of 45 different subunits. This is a component of the flavoprotein-sulfur (FP) fragment of the enzyme. It depends on [2Fe-2S] cluster as a cofactor.

The protein resides in the mitochondrion inner membrane. The enzyme catalyses a ubiquinone + NADH + 5 H(+)(in) = a ubiquinol + NAD(+) + 4 H(+)(out). Its function is as follows. Core subunit of the mitochondrial membrane respiratory chain NADH dehydrogenase (Complex I) which catalyzes electron transfer from NADH through the respiratory chain, using ubiquinone as an electron acceptor. Parts of the peripheral arm of the enzyme, where the electrons from NADH are accepted by flavin mononucleotide (FMN) and then passed along a chain of iron-sulfur clusters by electron tunnelling to the final acceptor ubiquinone. Contains one iron-sulfur cluster. This Mus musculus (Mouse) protein is NADH dehydrogenase [ubiquinone] flavoprotein 2, mitochondrial.